A 240-amino-acid chain; its full sequence is 3-deoxy-D-manno-octulosonic acid kinase (240 aa).

Residue Asp170 is part of the active site.

Belongs to the protein kinase superfamily. KdkA/RfaP family.

The protein resides in the cell inner membrane. It catalyses the reaction an alpha-Kdo-(2-&gt;6)-lipid IVA + ATP = a 4-O-phospho-alpha-Kdo-(2-&gt;6)-lipid IVA + ADP + H(+). Its pathway is bacterial outer membrane biogenesis; LPS core biosynthesis. Functionally, catalyzes the ATP-dependent phosphorylation of the 3-deoxy-D-manno-octulosonic acid (Kdo) residue in Kdo-lipid IV(A) at the 4-OH position. The polypeptide is 3-deoxy-D-manno-octulosonic acid kinase (Actinobacillus succinogenes (strain ATCC 55618 / DSM 22257 / CCUG 43843 / 130Z)).